The sequence spans 429 residues: Bifunctional protein GlmU (429 aa).

The tract at residues 1–223 (MKTSILILAA…EDEFMGINDK (223 aa)) is pyrophosphorylase. UDP-N-acetyl-alpha-D-glucosamine contacts are provided by residues 8–11 (LAAG), Lys22, Gln74, and 81–82 (GT). Asp102 contributes to the Mg(2+) binding site. Residues Gly135, Glu149, Asn164, and Asn221 each contribute to the UDP-N-acetyl-alpha-D-glucosamine site. Asn221 contacts Mg(2+). Residues 224-244 (FELSIAENFMQEKIKKYWMQQ) are linker. The segment at 245 to 429 (GVIFHLPQST…KNYYYKKFQK (185 aa)) is N-acetyltransferase. Residues Arg308 and Lys325 each contribute to the UDP-N-acetyl-alpha-D-glucosamine site. The active-site Proton acceptor is the His336. Residues Tyr339 and Asn350 each contribute to the UDP-N-acetyl-alpha-D-glucosamine site. Residues 359–360 (NY), Ser378, Ala396, and Arg413 each bind acetyl-CoA.

In the N-terminal section; belongs to the N-acetylglucosamine-1-phosphate uridyltransferase family. The protein in the C-terminal section; belongs to the transferase hexapeptide repeat family. As to quaternary structure, homotrimer. Mg(2+) serves as cofactor.

The protein resides in the cytoplasm. The enzyme catalyses alpha-D-glucosamine 1-phosphate + acetyl-CoA = N-acetyl-alpha-D-glucosamine 1-phosphate + CoA + H(+). The catalysed reaction is N-acetyl-alpha-D-glucosamine 1-phosphate + UTP + H(+) = UDP-N-acetyl-alpha-D-glucosamine + diphosphate. It participates in nucleotide-sugar biosynthesis; UDP-N-acetyl-alpha-D-glucosamine biosynthesis; N-acetyl-alpha-D-glucosamine 1-phosphate from alpha-D-glucosamine 6-phosphate (route II): step 2/2. The protein operates within nucleotide-sugar biosynthesis; UDP-N-acetyl-alpha-D-glucosamine biosynthesis; UDP-N-acetyl-alpha-D-glucosamine from N-acetyl-alpha-D-glucosamine 1-phosphate: step 1/1. Its pathway is bacterial outer membrane biogenesis; LPS lipid A biosynthesis. Catalyzes the last two sequential reactions in the de novo biosynthetic pathway for UDP-N-acetylglucosamine (UDP-GlcNAc). The C-terminal domain catalyzes the transfer of acetyl group from acetyl coenzyme A to glucosamine-1-phosphate (GlcN-1-P) to produce N-acetylglucosamine-1-phosphate (GlcNAc-1-P), which is converted into UDP-GlcNAc by the transfer of uridine 5-monophosphate (from uridine 5-triphosphate), a reaction catalyzed by the N-terminal domain. In Campylobacter jejuni subsp. doylei (strain ATCC BAA-1458 / RM4099 / 269.97), this protein is Bifunctional protein GlmU.